A 277-amino-acid chain; its full sequence is Caspase-3 (277 aa).

N-acetylmethionine is present on Met-1. 2 consecutive propeptides follow at residues 1-9 (MDNNETSVD) and 10-28 (SKSI…KSMD). Lys-11 is modified (N6-acetyllysine). Residue Ser-26 is modified to Phosphoserine. Catalysis depends on residues His-121 and Cys-163. The residue at position 163 (Cys-163) is an S-nitrosocysteine; in inhibited form.

It belongs to the peptidase C14A family. In terms of assembly, heterotetramer that consists of two anti-parallel arranged heterodimers, each one formed by a 17 kDa (p17) and a 12 kDa (p12) subunit. Interacts with BIRC6/bruce. Cleavage by granzyme B, caspase-6, caspase-8 and caspase-10 generates the two active subunits. Additional processing of the propeptides is likely due to the autocatalytic activity of the activated protease. Active heterodimers between the small subunit of caspase-7 protease and the large subunit of caspase-3 also occur and vice versa. In terms of processing, S-nitrosylated on its catalytic site cysteine in unstimulated cell lines and denitrosylated upon activation of the Fas apoptotic pathway, associated with an increase in intracellular caspase activity. Fas therefore activates caspase-3 not only by inducing the cleavage of the caspase zymogen to its active subunits, but also by stimulating the denitrosylation of its active site thiol. Post-translationally, ubiquitinated by BIRC6; this activity is inhibited by DIABLO/SMAC. As to expression, expressed in heart, brain, liver, and muscle but not in kidney or testis.

Its subcellular location is the cytoplasm. It carries out the reaction Strict requirement for an Asp residue at positions P1 and P4. It has a preferred cleavage sequence of Asp-Xaa-Xaa-Asp-|- with a hydrophobic amino-acid residue at P2 and a hydrophilic amino-acid residue at P3, although Val or Ala are also accepted at this position.. With respect to regulation, inhibited by BIRC6; following inhibition of BIRC6-caspase binding by DIABLO/SMAC, BIRC6 is subjected to caspase cleavage, leading to an increase in active caspases. Its function is as follows. Involved in the activation cascade of caspases responsible for apoptosis execution. At the onset of apoptosis, it proteolytically cleaves poly(ADP-ribose) polymerase PARP1 at a '216-Asp-|-Gly-217' bond. Cleaves and activates sterol regulatory element binding proteins (SREBPs) between the basic helix-loop-helix leucine zipper domain and the membrane attachment domain. Cleaves and activates caspase-6, -7 and -9 (CASP6, CASP7 and CASP9, respectively). Cleaves and inactivates interleukin-18 (IL18). Triggers cell adhesion in sympathetic neurons through RET cleavage. Cleaves IL-1 beta between an Asp and an Ala, releasing the mature cytokine which is involved in a variety of inflammatory processes. Cleaves and inhibits serine/threonine-protein kinase AKT1 in response to oxidative stress. Acts as an inhibitor of type I interferon production during virus-induced apoptosis by mediating cleavage of antiviral proteins CGAS, IRF3 and MAVS, thereby preventing cytokine overproduction. Also involved in pyroptosis by mediating cleavage and activation of gasdermin-E (GSDME). Cleaves XRCC4 and phospholipid scramblase proteins XKR4, XKR8 and XKR9, leading to promote phosphatidylserine exposure on apoptotic cell surface. Cleaves BIRC6 following inhibition of BIRC6-caspase binding by DIABLO/SMAC. This Rattus norvegicus (Rat) protein is Caspase-3 (Casp3).